A 294-amino-acid polypeptide reads, in one-letter code: N-acetylmuramic acid 6-phosphate etherase (294 aa).

The SIS domain maps to 54–217 (VIQSFEEEGR…STASMIGVGK (164 aa)). Glu82 (proton donor) is an active-site residue. The active site involves Glu113.

This sequence belongs to the GCKR-like family. MurNAc-6-P etherase subfamily. In terms of assembly, homodimer.

The catalysed reaction is N-acetyl-D-muramate 6-phosphate + H2O = N-acetyl-D-glucosamine 6-phosphate + (R)-lactate. Its pathway is amino-sugar metabolism; N-acetylmuramate degradation. In terms of biological role, specifically catalyzes the cleavage of the D-lactyl ether substituent of MurNAc 6-phosphate, producing GlcNAc 6-phosphate and D-lactate. The chain is N-acetylmuramic acid 6-phosphate etherase from Bacillus cereus (strain ZK / E33L).